A 581-amino-acid chain; its full sequence is Ezrin (581 aa).

An FERM domain is found at 2–295 (PKPINVRVTT…GNHELYMRRR (294 aa)). K60 carries the post-translational modification N6-acetyllysine. A [IL]-x-C-x-x-[DE] motif motif is present at residues 115-120 (IYCPPE). Residue Y146 is modified to Phosphotyrosine; by PDGFR. The tract at residues 244-581 (EIRNISFNDK…KQRIDEFEAM (338 aa)) is interaction with SCYL3. The stretch at 302–462 (VQQMKAQARE…QDDLVKTREE (161 aa)) forms a coiled coil. The interval 306 to 341 (KAQAREEKHQKQLERQQLETEKKRRETVEREKEQMM) is disordered. The span at 308–341 (QAREEKHQKQLERQQLETEKKRRETVEREKEQMM) shows a compositional bias: basic and acidic residues. Y354 carries the phosphotyrosine; by PDGFR modification. Phosphoserine is present on S366. Y476 is subject to Phosphotyrosine. The tract at residues 534 to 560 (SQARDENKRTHNDIIHNENMRQGRDKY) is disordered. The segment covering 535–560 (QARDENKRTHNDIIHNENMRQGRDKY) has biased composition (basic and acidic residues). T562 is modified (phosphothreonine; by ROCK2 and PKC/PRKCI).

As to quaternary structure, interacts with PALS1 and NHERF2. Found in a complex with EZR, PODXL and NHERF2. Interacts with MCC, PLEKHG6, PODXL, SCYL3/PACE1, NHERF1 and TMEM8B. Interacts (when phosphorylated) with FES/FPS. Interacts with dimeric S100P, the interaction may be activating through unmasking of F-actin binding sites. Identified in complexes that contain VIM, EZR, AHNAK, BFSP1, BFSP2, ANK2, PLEC, PRX and spectrin. Detected in a complex composed of at least EZR, AHNAK, PPL and PRX. Interacts with PDPN (via cytoplasmic domain); activates RHOA and promotes epithelial-mesenchymal transition. Interacts with SPN/CD43 cytoplasmic tail, CD44 and ICAM2. Interacts with SLC9A3; interaction targets SLC9A3 to the apical membrane. Interacts with SLC9A1; regulates interactions of SLC9A1 with cytoskeletal and promotes stress fiber formation. Interacts with CLIC5; may work together in a complex which also includes RDX and MYO6 to stabilize linkages between the plasma membrane and subjacent actin cytoskeleton at the base of stereocilia. Post-translationally, phosphorylated by tyrosine-protein kinases. Phosphorylation by ROCK2 suppresses the head-to-tail association of the N-terminal and C-terminal halves resulting in an opened conformation which is capable of actin and membrane-binding. S-nitrosylation is induced by interferon-gamma and oxidatively-modified low-densitity lipoprotein (LDL(ox)) possibly implicating the iNOS-S100A8/9 transnitrosylase complex. Detected in eye lens fiber cells (at protein level).

It localises to the apical cell membrane. The protein localises to the cell projection. Its subcellular location is the microvillus membrane. It is found in the ruffle membrane. The protein resides in the cytoplasm. It localises to the cell cortex. The protein localises to the cytoskeleton. Its subcellular location is the microvillus. Its activity is regulated as follows. A head-to-tail association, of the N-terminal and C-terminal halves results in a closed conformation (inactive form) which is incapable of actin or membrane-binding. Its function is as follows. Probably involved in connections of major cytoskeletal structures to the plasma membrane. In epithelial cells, required for the formation of microvilli and membrane ruffles on the apical pole. Along with PLEKHG6, required for normal macropinocytosis. The protein is Ezrin (EZR) of Bos taurus (Bovine).